A 364-amino-acid polypeptide reads, in one-letter code: Methylthioribose-1-phosphate isomerase (364 aa).

The Proton donor role is filled by D254.

The protein belongs to the eIF-2B alpha/beta/delta subunits family. MtnA subfamily.

It localises to the cytoplasm. Its subcellular location is the nucleus. It carries out the reaction 5-(methylsulfanyl)-alpha-D-ribose 1-phosphate = 5-(methylsulfanyl)-D-ribulose 1-phosphate. The protein operates within amino-acid biosynthesis; L-methionine biosynthesis via salvage pathway; L-methionine from S-methyl-5-thio-alpha-D-ribose 1-phosphate: step 1/6. Catalyzes the interconversion of methylthioribose-1-phosphate (MTR-1-P) into methylthioribulose-1-phosphate (MTRu-1-P). The protein is Methylthioribose-1-phosphate isomerase of Drosophila simulans (Fruit fly).